The sequence spans 92 residues: uncharacterized protein (92 aa).

The interval 1–92 is disordered; that stretch reads MSDAAAPAQA…PSPSQQQVAA (92 aa).

This is an uncharacterized protein from Caenorhabditis elegans.